The chain runs to 209 residues: 3-demethoxyubiquinol 3-hydroxylase (209 aa).

Low complexity predominate over residues 23–36 (PHATRAAPAPAQAP). Residues 23 to 42 (PHATRAAPAPAQAPGEMTDS) form a disordered region. Fe cation is bound by residues Glu-58, Glu-88, His-91, Glu-140, Glu-172, and His-175.

This sequence belongs to the COQ7 family. The cofactor is Fe cation.

Its subcellular location is the cell membrane. It catalyses the reaction a 5-methoxy-2-methyl-3-(all-trans-polyprenyl)benzene-1,4-diol + AH2 + O2 = a 3-demethylubiquinol + A + H2O. It functions in the pathway cofactor biosynthesis; ubiquinone biosynthesis. Catalyzes the hydroxylation of 2-nonaprenyl-3-methyl-6-methoxy-1,4-benzoquinol during ubiquinone biosynthesis. This is 3-demethoxyubiquinol 3-hydroxylase from Variovorax paradoxus (strain S110).